A 524-amino-acid chain; its full sequence is Chromosomal replication initiator protein DnaA (524 aa).

Residues 1–85 are domain I, interacts with DnaA modulators; that stretch reads MSQNSSSLLE…TRVLSLRMGR (85 aa). The tract at residues 85 to 182 is domain II; sequence RSFSLAVSVE…TPAHNPNREV (98 aa). Positions 95 to 183 are disordered; sequence PEQEIPETPA…PAHNPNREVS (89 aa). Pro residues predominate over residues 148-158; sequence APEPHPAPIAD. The segment at 183–399 is domain III, AAA+ region; it reads SLNPKYTFES…GALIRVSAYS (217 aa). ATP-binding residues include Gly-227, Gly-229, Lys-230, and Thr-231. The segment at 400–524 is domain IV, binds dsDNA; the sequence is SLINQPIDKE…TQLIKSRGRN (125 aa).

It belongs to the DnaA family. In terms of assembly, oligomerizes as a right-handed, spiral filament on DNA at oriC.

The protein localises to the cytoplasm. In terms of biological role, plays an essential role in the initiation and regulation of chromosomal replication. ATP-DnaA binds to the origin of replication (oriC) to initiate formation of the DNA replication initiation complex once per cell cycle. Binds the DnaA box (a 9 base pair repeat at the origin) and separates the double-stranded (ds)DNA. Forms a right-handed helical filament on oriC DNA; dsDNA binds to the exterior of the filament while single-stranded (ss)DNA is stabiized in the filament's interior. The ATP-DnaA-oriC complex binds and stabilizes one strand of the AT-rich DNA unwinding element (DUE), permitting loading of DNA polymerase. After initiation quickly degrades to an ADP-DnaA complex that is not apt for DNA replication. Binds acidic phospholipids. This Corynebacterium glutamicum (strain ATCC 13032 / DSM 20300 / JCM 1318 / BCRC 11384 / CCUG 27702 / LMG 3730 / NBRC 12168 / NCIMB 10025 / NRRL B-2784 / 534) protein is Chromosomal replication initiator protein DnaA.